We begin with the raw amino-acid sequence, 138 residues long: MLQPARRKYRKEQKGRNTGVATRGATVAFGDFGLKCTDRGRLTARQIEAARRAISRHVKRGGRIWIRVFPDKPISTKPAEVRMGNGKGNPEYYVAEIQPGKIVFEIVGVPEELAREAFRLAAAKLPLRTTFVSRLIGA.

Positions 1–13 (MLQPARRKYRKEQ) are enriched in basic residues. Residues 1 to 20 (MLQPARRKYRKEQKGRNTGV) form a disordered region.

It belongs to the universal ribosomal protein uL16 family. Part of the 50S ribosomal subunit.

Its function is as follows. Binds 23S rRNA and is also seen to make contacts with the A and possibly P site tRNAs. This is Large ribosomal subunit protein uL16 from Verminephrobacter eiseniae (strain EF01-2).